Reading from the N-terminus, the 702-residue chain is Elongation factor G (702 aa).

Residues 8–290 (ERYRNIGISA…AVIEYLPAPT (283 aa)) form the tr-type G domain. GTP is bound by residues 17–24 (AHIDAGKT), 88–92 (DTPGH), and 142–145 (NKMD).

It belongs to the TRAFAC class translation factor GTPase superfamily. Classic translation factor GTPase family. EF-G/EF-2 subfamily.

It localises to the cytoplasm. Catalyzes the GTP-dependent ribosomal translocation step during translation elongation. During this step, the ribosome changes from the pre-translocational (PRE) to the post-translocational (POST) state as the newly formed A-site-bound peptidyl-tRNA and P-site-bound deacylated tRNA move to the P and E sites, respectively. Catalyzes the coordinated movement of the two tRNA molecules, the mRNA and conformational changes in the ribosome. The polypeptide is Elongation factor G (Yersinia pseudotuberculosis serotype O:1b (strain IP 31758)).